A 218-amino-acid chain; its full sequence is Cytidylate kinase (218 aa).

11 to 19 (GPGASGKGT) contacts ATP.

The protein belongs to the cytidylate kinase family. Type 1 subfamily.

The protein localises to the cytoplasm. It carries out the reaction CMP + ATP = CDP + ADP. It catalyses the reaction dCMP + ATP = dCDP + ADP. The chain is Cytidylate kinase from Neisseria gonorrhoeae (strain ATCC 700825 / FA 1090).